A 661-amino-acid polypeptide reads, in one-letter code: Pentatricopeptide repeat-containing protein At3g04750, mitochondrial (661 aa).

The transit peptide at 1 to 18 directs the protein to the mitochondrion; that stretch reads MCFVLLLRRGFRLFGTEC. PPR repeat units lie at residues 99–131, 132–163, 165–195, 196–230, 231–265, 268–298, 299–333, 334–366, 367–401, 402–432, 433–467, 468–498, and 504–539; these read NVFV…RVSP, DRQT…GCLS, GNYL…MPHP, DVSS…GIEP, DEYT…GPVY, NLIL…MKKK, DMRS…DLVS, WNSL…KVKP, DRVT…QLKG, DAFL…ATEK, DVAL…GVTP, NNVT…MKDK, and ETEH…PSQS. The interval 540-615 is type E motif; the sequence is MWGSILSACR…TAGYSSVVGV (76 aa). Residues 616–647 form a type E(+) motif region; sequence EGLHRFVAAEKQNHPRWTEIKRILQHLYNEMK.

It belongs to the PPR family. PCMP-E subfamily.

It localises to the mitochondrion. In Arabidopsis thaliana (Mouse-ear cress), this protein is Pentatricopeptide repeat-containing protein At3g04750, mitochondrial (PCMP-E81).